Consider the following 286-residue polypeptide: Translocon-associated protein subunit alpha (286 aa).

Positions 1-18 (MRLLPRLLLLLLLVFPAT) are cleaved as a signal peptide. Residues 19–207 (VLFRGGPRGL…EREDGLDGET (189 aa)) are Lumenal-facing. The segment covering 39–75 (EETVEDSIIEDEDDEAEVEEDEPTDLVEDKEEEDVSG) has biased composition (acidic residues). Positions 39–83 (EETVEDSIIEDEDDEAEVEEDEPTDLVEDKEEEDVSGEPEASPSA) are disordered. N-linked (GlcNAc...) asparagine glycans are attached at residues Asn-136 and Asn-191. A helical transmembrane segment spans residues 208–228 (IFMYMFLAGLGLLVIVGLHQL). At 229 to 286 (LESRKRKRPIQKVEMGTSSQNDVDMSWIPQETLNQINKASPRRLPRKRAQKRSVGSDE) the chain is on the cytoplasmic side. Position 247 is a phosphoserine (Ser-247). The residue at position 260 (Thr-260) is a Phosphothreonine. The disordered stretch occupies residues 261 to 286 (LNQINKASPRRLPRKRAQKRSVGSDE). Ser-268 bears the Phosphoserine mark. A compositionally biased stretch (basic residues) spans 268-279 (SPRRLPRKRAQK).

This sequence belongs to the TRAP-alpha family. Heterotetramer of TRAP-alpha, TRAP-beta, TRAP-delta and TRAP-gamma. Interacts with palmitoylated calnexin (CALX), the interaction is required for efficient folding of glycosylated proteins.

The protein resides in the endoplasmic reticulum membrane. In terms of biological role, TRAP proteins are part of a complex whose function is to bind calcium to the ER membrane and thereby regulate the retention of ER resident proteins. May be involved in the recycling of the translocation apparatus after completion of the translocation process or may function as a membrane-bound chaperone facilitating folding of translocated proteins. The protein is Translocon-associated protein subunit alpha (SSR1) of Homo sapiens (Human).